A 346-amino-acid polypeptide reads, in one-letter code: Hexosaminidase D (346 aa).

The active-site Proton donor is E141.

The protein belongs to the glycosyl hydrolase 20 family. Homodimer; disulfide-linked.

It localises to the cytoplasm. The protein resides in the nucleus. The protein localises to the extracellular vesicle. It catalyses the reaction Hydrolysis of terminal non-reducing N-acetyl-D-hexosamine residues in N-acetyl-beta-D-hexosaminides.. Its activity is regulated as follows. Inhibited by O-(2-acetamido-2-deoxy-D-glucopyranosylidene)amino N-phenylcarbamate (PUGNAc). Inhibited by galacto-NAG-thiazoline. Its function is as follows. Has hexosaminidase activity. Responsible for the cleavage of the monosaccharides N-acetylglucosamine (GlcNAc) and N-acetylgalactosamine (GalNAc) from cellular substrates. Has a preference for galactosaminide over glucosaminide substrates. The sequence is that of Hexosaminidase D from Bos taurus (Bovine).